Reading from the N-terminus, the 174-residue chain is dCTP deaminase, dUMP-forming (174 aa).

DCTP contacts are provided by residues 93–98, Asp111, 119–121, Gln138, and Tyr151; these read RSSIGR and TLE. Glu121 (proton donor/acceptor) is an active-site residue.

Belongs to the dCTP deaminase family. Homotrimer.

It carries out the reaction dCTP + 2 H2O = dUMP + NH4(+) + diphosphate. It participates in pyrimidine metabolism; dUMP biosynthesis; dUMP from dCTP: step 1/1. Its function is as follows. Bifunctional enzyme that catalyzes both the deamination of dCTP to dUTP and the hydrolysis of dUTP to dUMP without releasing the toxic dUTP intermediate. The sequence is that of dCTP deaminase, dUMP-forming from Leptospira biflexa serovar Patoc (strain Patoc 1 / Ames).